The sequence spans 335 residues: Calcium-binding protein TgpCaBP (335 aa).

The chain crosses the membrane as a helical span at residues 30–50 (LPLCVFSLFLFSFAFSALSGA). 4 consecutive EF-hand domains span residues 113-148 (MHQH…SLDQ), 153-188 (QHKK…GKDE), 190-225 (LMKI…GSLN), and 227-262 (VEKT…PHSH). The Ca(2+) site is built by Asp126, Asp128, Asp130, Lys132, Glu137, Asp166, Asp168, Asp170, Glu177, Asp203, Asn205, Asp207, Lys209, Glu214, Asp240, Asn242, Asp244, and Glu251. A Prevents secretion from ER motif is present at residues 332 to 335 (HDEL).

Its subcellular location is the endoplasmic reticulum membrane. It is found in the cytoplasm. It localises to the cytosol. Calcium-binding protein. Participates in the efflux of intracellular Ca(2+) and storage of Ca(2+) in the endoplasmic reticulum. Required for gliding, host cell invasion and egress. Required for microneme secretion. The sequence is that of Calcium-binding protein TgpCaBP from Toxoplasma gondii.